We begin with the raw amino-acid sequence, 351 residues long: N-acetyl-gamma-glutamyl-phosphate reductase (351 aa).

Cysteine 154 is an active-site residue.

The protein belongs to the NAGSA dehydrogenase family. Type 1 subfamily.

It localises to the cytoplasm. It catalyses the reaction N-acetyl-L-glutamate 5-semialdehyde + phosphate + NADP(+) = N-acetyl-L-glutamyl 5-phosphate + NADPH + H(+). It functions in the pathway amino-acid biosynthesis; L-arginine biosynthesis; N(2)-acetyl-L-ornithine from L-glutamate: step 3/4. Catalyzes the NADPH-dependent reduction of N-acetyl-5-glutamyl phosphate to yield N-acetyl-L-glutamate 5-semialdehyde. The chain is N-acetyl-gamma-glutamyl-phosphate reductase from Synechocystis sp. (strain ATCC 27184 / PCC 6803 / Kazusa).